A 368-amino-acid polypeptide reads, in one-letter code: 3-dehydroquinate synthase (368 aa).

Residues 110-114 (GVIGD), 134-135 (TS), K147, and K156 each bind NAD(+). Zn(2+) is bound by residues E189, H254, and H271.

This sequence belongs to the sugar phosphate cyclases superfamily. Dehydroquinate synthase family. The cofactor is NAD(+). Co(2+) is required as a cofactor. Requires Zn(2+) as cofactor.

It localises to the cytoplasm. The enzyme catalyses 7-phospho-2-dehydro-3-deoxy-D-arabino-heptonate = 3-dehydroquinate + phosphate. Its pathway is metabolic intermediate biosynthesis; chorismate biosynthesis; chorismate from D-erythrose 4-phosphate and phosphoenolpyruvate: step 2/7. Its function is as follows. Catalyzes the conversion of 3-deoxy-D-arabino-heptulosonate 7-phosphate (DAHP) to dehydroquinate (DHQ). This Thermosynechococcus vestitus (strain NIES-2133 / IAM M-273 / BP-1) protein is 3-dehydroquinate synthase.